Reading from the N-terminus, the 1058-residue chain is Carbamoyl phosphate synthase large chain (1058 aa).

The carboxyphosphate synthetic domain stretch occupies residues 1-401 (MPKRTDIQKI…SLLKACRSLE (401 aa)). R129, R169, G175, G176, R208, I210, E215, G241, I242, H243, Q284, and E298 together coordinate ATP. The ATP-grasp 1 domain occupies 133–327 (KQLMEELEQP…IAKLAAKIAV (195 aa)). The Mg(2+) site is built by Q284, E298, and N300. Residues Q284, E298, and N300 each coordinate Mn(2+). The interval 402–546 (IGVHHNEIPE…YSTYGWENES (145 aa)) is oligomerization domain. The interval 547–929 (IKSDKESVLV…ALYKAFEASY (383 aa)) is carbamoyl phosphate synthetic domain. One can recognise an ATP-grasp 2 domain in the interval 671–861 (EQALKELDIP…MAQVATKLIL (191 aa)). The ATP site is built by R707, S746, I748, E752, G777, V778, H779, S780, Q820, and E832. The Mg(2+) site is built by Q820, E832, and N834. Q820, E832, and N834 together coordinate Mn(2+). The MGS-like domain occupies 930–1058 (LHLPTFGNVV…ESRSFVTEAI (129 aa)). The segment at 930 to 1058 (LHLPTFGNVV…ESRSFVTEAI (129 aa)) is allosteric domain.

The protein belongs to the CarB family. As to quaternary structure, composed of two chains; the small (or glutamine) chain promotes the hydrolysis of glutamine to ammonia, which is used by the large (or ammonia) chain to synthesize carbamoyl phosphate. Tetramer of heterodimers (alpha,beta)4. Requires Mg(2+) as cofactor. The cofactor is Mn(2+).

It catalyses the reaction hydrogencarbonate + L-glutamine + 2 ATP + H2O = carbamoyl phosphate + L-glutamate + 2 ADP + phosphate + 2 H(+). It carries out the reaction hydrogencarbonate + NH4(+) + 2 ATP = carbamoyl phosphate + 2 ADP + phosphate + 2 H(+). It participates in amino-acid biosynthesis; L-arginine biosynthesis; carbamoyl phosphate from bicarbonate: step 1/1. The protein operates within pyrimidine metabolism; UMP biosynthesis via de novo pathway; (S)-dihydroorotate from bicarbonate: step 1/3. Large subunit of the glutamine-dependent carbamoyl phosphate synthetase (CPSase). CPSase catalyzes the formation of carbamoyl phosphate from the ammonia moiety of glutamine, carbonate, and phosphate donated by ATP, constituting the first step of 2 biosynthetic pathways, one leading to arginine and/or urea and the other to pyrimidine nucleotides. The large subunit (synthetase) binds the substrates ammonia (free or transferred from glutamine from the small subunit), hydrogencarbonate and ATP and carries out an ATP-coupled ligase reaction, activating hydrogencarbonate by forming carboxy phosphate which reacts with ammonia to form carbamoyl phosphate. This Streptococcus pneumoniae (strain ATCC 700669 / Spain 23F-1) protein is Carbamoyl phosphate synthase large chain.